Here is a 246-residue protein sequence, read N- to C-terminus: Acetoacetate decarboxylase (246 aa).

Lysine 116 (schiff-base intermediate with acetoacetate) is an active-site residue.

The protein belongs to the ADC family.

It carries out the reaction acetoacetate + H(+) = acetone + CO2. In terms of biological role, catalyzes the conversion of acetoacetate to acetone and carbon dioxide. This is Acetoacetate decarboxylase from Bordetella avium (strain 197N).